The chain runs to 493 residues: Sodium-coupled neutral amino acid symporter 2 (493 aa).

At 1-72 the chain is on the cytoplasmic side; that stretch reads MNNAEVLNVA…LPGTTSFGMS (72 aa). Residues 1–92 form a regulates protein turnover upon amino acid deprivation region; it reads MNNAEVLNVA…SGILGLSYAM (92 aa). The helical transmembrane segment at 73-92 threads the bilayer; it reads VFNLSNAIVGSGILGLSYAM. Asn-78 lines the Na(+) pocket. The Extracellular segment spans residues 93-98; that stretch reads ANTGIA. Residues 99–119 traverse the membrane as a helical segment; sequence LFMILLVFVTVFSLYSIHLLL. The Cytoplasmic portion of the chain corresponds to 120–154; that stretch reads KTANEGGSLLYEQLGLKAFGIPGKLAASGSVTLQN. Residues 155–173 traverse the membrane as a helical segment; the sequence is IGAMSSYLYIVKYELPLVI. Residues 174-184 lie on the Extracellular side of the membrane; that stretch reads KALMDIKESNG. Residues 185 to 205 form a helical membrane-spanning segment; sequence EWYLNGDYLVIMVSLAIILPL. Residues 206 to 213 lie on the Cytoplasmic side of the membrane; it reads SLLRNLGY. Residues 214-234 traverse the membrane as a helical segment; the sequence is LGYTSGFSPLCMVFFLIVVIY. The Extracellular portion of the chain corresponds to 235 to 279; it reads KKFEIPCPLEAMNMTSNSSSHDHMAHNETDDEMCKPKYFVFNSQT. Cys-241 and Cys-268 are joined by a disulfide. N-linked (GlcNAc...) asparagine glycans are attached at residues Asn-247, Asn-251, and Asn-261. Residues 280 to 300 traverse the membrane as a helical segment; it reads VYAVPILTFSFVCHPAVLPIY. The Cytoplasmic segment spans residues 301–316; the sequence is QELKGRSRRRMMNVSN. Residues 317–337 form a helical membrane-spanning segment; sequence VSFFAMFIMYLLAALFGYLTF. Over 338 to 358 the chain is Extracellular; the sequence is YSKVEPELLHTYSKVFGAGVI. Residues 359 to 379 traverse the membrane as a helical segment; it reads FVVVRLAVLMAVTLTVPIVIF. Thr-373 serves as a coordination point for Na(+). The Cytoplasmic segment spans residues 380-400; sequence PIRSSLNELFCSGKDFAWIRH. The chain crosses the membrane as a helical span at residues 401–421; sequence ILITFLILAFTNVLVIFVPTI. At 422 to 423 the chain is on the extracellular side; the sequence is RD. The helical transmembrane segment at 424-444 threads the bilayer; that stretch reads IFGFIGASAAAMLVFILPSAF. At 445-459 the chain is on the cytoplasmic side; it reads YIRLVKKESMKSVQK. A helical membrane pass occupies residues 460–482; sequence IGALLFLIGGIIVMIGSMTLIIL. Residues 483-493 are Extracellular-facing; sequence DWIHNSTSGGN.

It belongs to the amino acid/polyamine transporter 2 family.

The protein resides in the cell membrane. The enzyme catalyses L-alanine(in) + Na(+)(in) = L-alanine(out) + Na(+)(out). It catalyses the reaction glycine(in) + Na(+)(in) = glycine(out) + Na(+)(out). The catalysed reaction is L-serine(in) + Na(+)(in) = L-serine(out) + Na(+)(out). It carries out the reaction L-proline(in) + Na(+)(in) = L-proline(out) + Na(+)(out). The enzyme catalyses L-methionine(in) + Na(+)(in) = L-methionine(out) + Na(+)(out). It catalyses the reaction L-histidine(in) + Na(+)(in) = L-histidine(out) + Na(+)(out). The catalysed reaction is L-asparagine(in) + Na(+)(in) = L-asparagine(out) + Na(+)(out). It carries out the reaction L-glutamine(in) + Na(+)(in) = L-glutamine(out) + Na(+)(out). The enzyme catalyses L-threonine(in) + Na(+)(in) = L-threonine(out) + Na(+)(out). It catalyses the reaction L-leucine(in) + Na(+)(in) = L-leucine(out) + Na(+)(out). The catalysed reaction is L-phenylalanine(in) + Na(+)(in) = L-phenylalanine(out) + Na(+)(out). Its activity is regulated as follows. Inhibited by N-methyl-D-glucamine. Inhibited by choline. Allosteric regulation of sodium ions binding by pH. Symporter that cotransports neutral amino acids and sodium ions from the extracellular to the intracellular side of the cell membrane. The transport is pH-sensitive, Li(+)-intolerant, electrogenic, driven by the Na(+) electrochemical gradient and cotransports of neutral amino acids and sodium ions with a stoichiometry of 1:1. The polypeptide is Sodium-coupled neutral amino acid symporter 2 (Xenopus tropicalis (Western clawed frog)).